A 452-amino-acid chain; its full sequence is 1,4-beta-D-glucan cellobiohydrolase A (452 aa).

Positions Met1–Ala17 are cleaved as a signal peptide. Asn62 carries N-linked (GlcNAc...) asparagine glycosylation. The active-site Nucleophile is the Glu227. The active-site Proton donor is the Glu232. Asn285, Asn335, Asn402, and Asn445 each carry an N-linked (GlcNAc...) asparagine glycan.

This sequence belongs to the glycosyl hydrolase 7 (cellulase C) family.

It is found in the secreted. It catalyses the reaction Hydrolysis of (1-&gt;4)-beta-D-glucosidic linkages in cellulose and cellotetraose, releasing cellobiose from the non-reducing ends of the chains.. Its function is as follows. The biological conversion of cellulose to glucose generally requires three types of hydrolytic enzymes: (1) Endoglucanases which cut internal beta-1,4-glucosidic bonds; (2) Exocellobiohydrolases that cut the disaccharide cellobiose from the non-reducing end of the cellulose polymer chain; (3) Beta-1,4-glucosidases which hydrolyze the cellobiose and other short cello-oligosaccharides to glucose. This chain is 1,4-beta-D-glucan cellobiohydrolase A (cbhA), found in Aspergillus niger.